The primary structure comprises 97 residues: Defensin-A2 (97 aa).

Positions M1 to A19 are cleaved as a signal peptide. A propeptide spanning residues Q20–R61 is cleaved from the precursor. Disulfide bonds link C66–C93, C68–C82, and C72–C92. Residues T96–S97 constitute a propeptide that is removed on maturation.

The protein belongs to the alpha-defensin family. As to expression, highly expressed in intestine, expressed at lower levels in spleen, and at very low levels in kidney and lung.

Its subcellular location is the secreted. Has antimicrobial activity. The chain is Defensin-A2 from Ornithorhynchus anatinus (Duckbill platypus).